Here is a 640-residue protein sequence, read N- to C-terminus: RNA polymerase II elongation factor ELL2 (640 aa).

3 disordered regions span residues 172–202 (AVSDTVPERKRSTPMNPANTIRKTHSSSTIS), 290–320 (KLNPSQNAAGTSRSESPVCSSRDAVSSPQKR), and 343–490 (RVPP…EEDL). Composition is skewed to polar residues over residues 184 to 202 (TPMNPANTIRKTHSSSTIS) and 291 to 318 (LNPSQNAAGTSRSESPVCSSRDAVSSPQ). The segment covering 360 to 372 (AAGLPLPPAAAAI) has biased composition (low complexity). A compositionally biased stretch (polar residues) spans 391–401 (IVNSNSNSPST). Residues 457–470 (MSHKKSKKKSKKHK) are compositionally biased toward basic residues. The span at 471–490 (EKDQIKKHDIETIEEKEEDL) shows a compositional bias: basic and acidic residues. Ser-503 and Ser-580 each carry phosphoserine. The OCEL domain occupies 526-636 (PDYLIKYIAI…LIGEFDQQQA (111 aa)).

The protein belongs to the ELL/occludin family. In terms of assembly, component of the super elongation complex (SEC), at least composed of EAF1, EAF2, CDK9, MLLT3/AF9, AFF (AFF1 or AFF4), the P-TEFb complex and ELL (ELL, ELL2 or ELL3). Component of the little elongation complex (LEC), at least composed of ELL (ELL, ELL2 or ELL3), ZC3H8, ICE1 and ICE2. Interacts with AFF4; the interaction is direct and leads to stabilize ELL2 and prevent ELL2 ubiquitination. Interacts with EAF1 and EAF2. Post-translationally, ubiquitinated by SIAH1, leading to its degradation by the proteasome. Interaction with AFF4 stabilizes ELL2 and prevents ELL2 ubiquitination.

The protein localises to the nucleus. Functionally, elongation factor component of the super elongation complex (SEC), a complex required to increase the catalytic rate of RNA polymerase II transcription by suppressing transient pausing by the polymerase at multiple sites along the DNA. Component of the little elongation complex (LEC), a complex required to regulate small nuclear RNA (snRNA) gene transcription by RNA polymerase II and III. Plays a role in immunoglobulin secretion in plasma cells: directs efficient alternative mRNA processing, influencing both proximal poly(A) site choice and exon skipping, as well as immunoglobulin heavy chain (IgH) alternative processing. Probably acts by regulating histone modifications accompanying transition from membrane-specific to secretory IgH mRNA expression. The protein is RNA polymerase II elongation factor ELL2 (ELL2) of Homo sapiens (Human).